The chain runs to 41 residues: SEKPQQELEECQNVCRMKRWSTEMVHRCEKKCEEKFERQQR.

Disulfide bonds link Cys11-Cys32 and Cys15-Cys28.

Inhibits bovine trypsin with a Ki of 0.174 nM and trypsin-like proteases from G.mellonella larvae. Has no activity against serine proteases chymotrypsin, subtilisin and elastase. Has no activity against cysteine proteases from beetle gut. This chain is Trypsin inhibitor 2c, found in Fagopyrum esculentum (Common buckwheat).